Here is a 537-residue protein sequence, read N- to C-terminus: Protein ST7 homolog (537 aa).

Residues F15–W35 traverse the membrane as a helical segment. The tract at residues S61 to M111 is disordered. Residues S67–N84 are compositionally biased toward low complexity. Residues G85–G99 show a composition bias toward gly residues. Residues S100–T109 are compositionally biased toward low complexity. Residues L472–A492 form a helical membrane-spanning segment.

The protein belongs to the ST7 family.

Its subcellular location is the membrane. This Drosophila melanogaster (Fruit fly) protein is Protein ST7 homolog.